The following is a 154-amino-acid chain: AP-1 complex subunit sigma-3 (154 aa).

It belongs to the adaptor complexes small subunit family. In terms of assembly, adaptor protein complex 1 (AP-1) is a heterotetramer composed of two large adaptins (gamma-type subunit AP1G1 and beta-type subunit AP1B1), a medium adaptin (mu-type subunit AP1M1 or AP1M2) and a small adaptin (sigma-type subunit AP1S1 or AP1S2 or AP1S3).

It localises to the golgi apparatus. The protein localises to the cytoplasmic vesicle membrane. It is found in the membrane. The protein resides in the clathrin-coated pit. Functionally, subunit of clathrin-associated adaptor protein complex 1 that plays a role in protein sorting in the late-Golgi/trans-Golgi network (TGN) and/or endosomes. The AP complexes mediate both the recruitment of clathrin to membranes and the recognition of sorting signals within the cytosolic tails of transmembrane cargo molecules. Involved in TLR3 trafficking. The sequence is that of AP-1 complex subunit sigma-3 (Ap1s3) from Mus musculus (Mouse).